The sequence spans 279 residues: Large ribosomal subunit protein uL2 (279 aa).

Residues 223–279 (MAMNPVDHPMGGGEGKSKSGGGRKHPKSPWGQLAKGLKTRNKKKASTKLIVRGRKAK) form a disordered region. The segment covering 232-242 (MGGGEGKSKSG) has biased composition (gly residues). Basic residues predominate over residues 259-279 (LKTRNKKKASTKLIVRGRKAK).

The protein belongs to the universal ribosomal protein uL2 family. Part of the 50S ribosomal subunit. Forms a bridge to the 30S subunit in the 70S ribosome.

One of the primary rRNA binding proteins. Required for association of the 30S and 50S subunits to form the 70S ribosome, for tRNA binding and peptide bond formation. It has been suggested to have peptidyltransferase activity; this is somewhat controversial. Makes several contacts with the 16S rRNA in the 70S ribosome. The protein is Large ribosomal subunit protein uL2 of Chlorobaculum tepidum (strain ATCC 49652 / DSM 12025 / NBRC 103806 / TLS) (Chlorobium tepidum).